Here is a 177-residue protein sequence, read N- to C-terminus: Large ribosomal subunit protein uL5 (177 aa).

The protein belongs to the universal ribosomal protein uL5 family. As to quaternary structure, part of the 50S ribosomal subunit. Interacts with protein L18 and the 5S rRNA, and probably with tRNAs. Forms a bridge to the 30S subunit in the 70S ribosome.

This is 1 of 5 proteins that mediates the attachment of the 5S rRNA onto the large ribosomal subunit, stabilizing the orientation of adjacent RNA domains. Forms part of the central protuberance. Modeling places the A and P site tRNAs in close proximity to this protein; the 5S rRNA and some of its associated proteins might help stabilize positioning of ribosome-bound tRNAs. In the 70S ribosome it is thought to contact protein S13 of the 30S subunit (bridge B1b), connecting the 2 subunits; this bridge is implicated in subunit movement. The chain is Large ribosomal subunit protein uL5 (rpl5) from Haloarcula marismortui (strain ATCC 43049 / DSM 3752 / JCM 8966 / VKM B-1809) (Halobacterium marismortui).